Here is a 361-residue protein sequence, read N- to C-terminus: MHFSTITAALALLGLGAATPTDYSTSSYSKNQGLAQAWTSKGRQYIGTALTIRDDPVEQGIIQSRTDFNSITPENAMKWESTEPQRNNFTFAGADAVADFADRYNKEMRCHTLVWHSQLPAWVSQGNFDNKTLISIMENHIKKVAGRYKNKCTHWDVVNEALNEDGTYRSSVFYNTIGEAFIPIAFRFAEKYAGSKTKLYYNDYNLEYGSAKALGAQRILKLVQSYGVQIDGVGLQAHLSSEATASTGGGVTPDVQTLTNVLKLYTDLGVEVAYTELDVRFTTPATDAKLKAQADAYARVVQSCINVKRCVGITVWGVSDKYSWIPGVFPTEGAALLWDENFNKKPAYSSVLKTIQSFRKS.

A signal peptide spans 1–26 (MHFSTITAALALLGLGAATPTDYSTS). Residues 46-354 (IGTALTIRDD…KPAYSSVLKT (309 aa)) enclose the GH10 domain. Residues Asn-88 and Asn-130 are each glycosylated (N-linked (GlcNAc...) asparagine). Residue Glu-160 is the Proton donor of the active site. Catalysis depends on Glu-276, which acts as the Nucleophile. A disulfide bridge connects residues Cys-304 and Cys-310.

The protein belongs to the glycosyl hydrolase 10 (cellulase F) family.

It is found in the secreted. It catalyses the reaction Endohydrolysis of (1-&gt;4)-beta-D-xylosidic linkages in xylans.. It functions in the pathway glycan degradation; xylan degradation. Its function is as follows. Endo-1,4-beta-xylanase involved in the hydrolysis of xylan, a major structural heterogeneous polysaccharide found in plant biomass representing the second most abundant polysaccharide in the biosphere, after cellulose. Hydrolyzes birch-wood xylan, with a similar activity toward oat-spelt xylan. Also shows weak activities toward pNP-beta-D-cellobioside and pNP-beta-D-xylopyranoside, but no detectable activity toward carboxymethyl cellulose and pNP-beta-L-arabinofuranoside.-. The protein is Endo-1,4-beta-xylanase 2 (xynII) of Aureobasidium pullulans (Black yeast).